Consider the following 166-residue polypeptide: MQTIEQQITNVIEKSLTDMGFELVLIKFKGVNHKVVEILIDSLNGEKISVADCTKASSTISAILDVEDLIEDAYSLEVASSGLERPLVKFENYNRFLGREVKVKLKELLNGKTRYQGKIIKAENNKVYLKCEAQEVLIDYDLIKNANLVLTEEVLKKLLGSVKVSN.

It belongs to the RimP family.

Its subcellular location is the cytoplasm. Required for maturation of 30S ribosomal subunits. The chain is Ribosome maturation factor RimP from Rickettsia akari (strain Hartford).